We begin with the raw amino-acid sequence, 328 residues long: Phosphatidylglycerol--prolipoprotein diacylglyceryl transferase (328 aa).

3 helical membrane-spanning segments follow: residues 15–35, 58–78, and 106–126; these read VIQG…ILIS, FMFS…TLVY, and GMAI…IINT. Arg-156 contacts a 1,2-diacyl-sn-glycero-3-phospho-(1'-sn-glycerol). Helical transmembrane passes span 242 to 262 and 289 to 309; these read GFIF…IEYL and ISMG…WVVV.

The protein belongs to the Lgt family.

It is found in the cell inner membrane. The enzyme catalyses L-cysteinyl-[prolipoprotein] + a 1,2-diacyl-sn-glycero-3-phospho-(1'-sn-glycerol) = an S-1,2-diacyl-sn-glyceryl-L-cysteinyl-[prolipoprotein] + sn-glycerol 1-phosphate + H(+). Its pathway is protein modification; lipoprotein biosynthesis (diacylglyceryl transfer). Its function is as follows. Catalyzes the transfer of the diacylglyceryl group from phosphatidylglycerol to the sulfhydryl group of the N-terminal cysteine of a prolipoprotein, the first step in the formation of mature lipoproteins. This chain is Phosphatidylglycerol--prolipoprotein diacylglyceryl transferase, found in Borrelia garinii subsp. bavariensis (strain ATCC BAA-2496 / DSM 23469 / PBi) (Borreliella bavariensis).